A 357-amino-acid polypeptide reads, in one-letter code: EGF-like domain-containing protein 2 (357 aa).

An N-terminal signal peptide occupies residues 1–20; the sequence is MPPSLSHLFLLSTFASLALC. EGF-like domains are found at residues 21-55 and 61-93; these read SFYCKNPGYPCLNGGTCLYNGECNCTSGFRGFNCG and ISAACTVECHNKGICFNGDKCYCTKDYMGPTCQ. Intrachain disulfides connect C24–C37, C31–C43, C45–C54, C65–C75, C69–C81, and C83–C92.

In terms of tissue distribution, prismatic layer of shell (at protein level). Expressed primarily in the mantle with highest level in the mantle edge and lower level in the mantle pallium.

The protein localises to the secreted. The protein is EGF-like domain-containing protein 2 of Pinctada maxima (Silver-lipped pearl oyster).